Reading from the N-terminus, the 352-residue chain is Photosystem II D2 protein (352 aa).

T2 is subject to N-acetylthreonine. Phosphothreonine is present on T2. Residues 40–60 traverse the membrane as a helical segment; that stretch reads CAYFALGGWLTGTTFVSSWYT. Position 117 (H117) interacts with chlorophyll a. A helical membrane pass occupies residues 124 to 140; sequence GFMLRQFEIARAVQIRP. Pheophytin a-binding residues include Q129 and N142. Residues 152–165 traverse the membrane as a helical segment; it reads VFVSVFLIYPLGQS. H197 serves as a coordination point for chlorophyll a. Residues 207-227 traverse the membrane as a helical segment; sequence AALLCAIHGATVENTLFEDGD. 2 residues coordinate a plastoquinone: H214 and F261. H214 is a binding site for Fe cation. Fe cation is bound at residue H268. Residues 278-294 form a helical membrane-spanning segment; it reads GLWMSALGVVGLALNLR.

Belongs to the reaction center PufL/M/PsbA/D family. As to quaternary structure, PSII is composed of 1 copy each of membrane proteins PsbA, PsbB, PsbC, PsbD, PsbE, PsbF, PsbH, PsbI, PsbJ, PsbK, PsbL, PsbM, PsbT, PsbX, PsbY, PsbZ, Psb30/Ycf12, at least 3 peripheral proteins of the oxygen-evolving complex and a large number of cofactors. It forms dimeric complexes. The D1/D2 heterodimer binds P680, chlorophylls that are the primary electron donor of PSII, and subsequent electron acceptors. It shares a non-heme iron and each subunit binds pheophytin, quinone, additional chlorophylls, carotenoids and lipids. There is also a Cl(-1) ion associated with D1 and D2, which is required for oxygen evolution. The PSII complex binds additional chlorophylls, carotenoids and specific lipids. serves as cofactor.

It localises to the plastid. The protein resides in the chloroplast thylakoid membrane. It catalyses the reaction 2 a plastoquinone + 4 hnu + 2 H2O = 2 a plastoquinol + O2. Functionally, photosystem II (PSII) is a light-driven water:plastoquinone oxidoreductase that uses light energy to abstract electrons from H(2)O, generating O(2) and a proton gradient subsequently used for ATP formation. It consists of a core antenna complex that captures photons, and an electron transfer chain that converts photonic excitation into a charge separation. The D1/D2 (PsbA/PsbD) reaction center heterodimer binds P680, the primary electron donor of PSII as well as several subsequent electron acceptors. D2 is needed for assembly of a stable PSII complex. This is Photosystem II D2 protein from Ostreococcus tauri.